Consider the following 145-residue polypeptide: Putative antiporter subunit mnhG2 (145 aa).

3 consecutive transmembrane segments (helical) span residues 11–31 (IAAVMLLLGSFIALISAIGIV), 51–71 (VLLTLIGVLIYFIVNTGFFSV), and 72–92 (RLLLSLVFINLTSPVGMHLVA).

Belongs to the CPA3 antiporters (TC 2.A.63) subunit G family. In terms of assembly, may form a heterooligomeric complex that consists of seven subunits: mnhA2, mnhB2, mnhC2, mnhD2, mnhE2, mnhF2 and mnhG2.

It localises to the cell membrane. The chain is Putative antiporter subunit mnhG2 (mnhG2) from Staphylococcus aureus (strain COL).